The chain runs to 254 residues: 30 kDa major early protein (254 aa).

This chain is 30 kDa major early protein, found in Human cytomegalovirus (strain Eisenhardt) (HHV-5).